A 480-amino-acid polypeptide reads, in one-letter code: F-box only protein 3 (480 aa).

Residues 10-56 (LLTLESLPTDPLLLILSFVDYRDLINCCYVSRRLSQLSTHDPLWRRH) enclose the F-box domain. Residues 278–408 (VATTGDITVS…FHMACPTFRV (131 aa)) enclose the ApaG domain. Acidic residues predominate over residues 419-459 (EYEEMEEEAEEEEEEENDDSADMDESDESDEDENESDEGEG). Residues 419–464 (EYEEMEEEAEEEEEEENDDSADMDESDESDEDENESDEGEGEERRR) form a disordered region.

In terms of assembly, part of a SCF (SKP1-cullin-F-box) protein ligase complex SCF(FBXO3) consisting of FBXO3, SKP1, CUL1 and RBX1. Interacts with PML, interaction is direct and takes place either alone or within the SCF complex.

The protein resides in the nucleus. Its pathway is protein modification; protein ubiquitination. Functionally, substrate recognition component of the SCF (SKP1-CUL1-F-box protein)-type E3 ubiquitin ligase complex, SCF(FBXO3), which mediates the ubiquitination and subsequent proteasomal degradation of target proteins. Mediates the ubiquitination of HIPK2 and probably that of EP300, leading to rapid degradation by the proteasome. In the presence of PML, HIPK2 ubiquitination still occurs, but degradation is prevented. PML, HIPK2 and FBXO3 may act synergically to activate p53/TP53-dependent transactivation. The SCF(FBXO3) also acts as a regulator of inflammation by mediating ubiquitination and degradation of FBXL2 in response to lipopolysaccharide (LPS). The SCF(FBXO3) complex specifically recognizes FBXL2 phosphorylated at 'Thr-404' and promotes its ubiquitination. The chain is F-box only protein 3 (Fbxo3) from Rattus norvegicus (Rat).